We begin with the raw amino-acid sequence, 855 residues long: Pre-mRNA-splicing factor SYF1 (855 aa).

9 HAT repeats span residues L15 to G47, A48 to A80, P90 to D122, G124 to S158, P160 to R192, Q198 to Q230, V235 to R268, G270 to S305, and G369 to D407. K420 carries the N6-acetyllysine modification. HAT repeat units lie at residues G498–E530, K532–A566, R571–E605, Y643–K677, and G679–R713. A disordered region spans residues L810–D855. The segment covering Q820–P834 has biased composition (acidic residues). Phosphoserine is present on S851.

This sequence belongs to the crooked-neck family. As to quaternary structure, associates with RNA polymerase II, the TCR-specific proteins CKN1/CSA and ERCC6/CSB, and XPA. Identified in the spliceosome C complex. Component of the XAB2 complex, a multimeric protein complex composed of XAB2, PRPF19, AQR, ZNF830, ISY1, and PPIE. Identified in a pentameric intron-binding (IB) complex composed of AQR, XAB2, ISY1, ZNF830 and PPIE that is incorporated into the spliceosome as a preassembled complex. The IB complex does not contain PRPF19.

The protein resides in the nucleus. Functionally, involved in pre-mRNA splicing as component of the spliceosome. Involved in transcription-coupled repair (TCR), transcription and pre-mRNA splicing. The polypeptide is Pre-mRNA-splicing factor SYF1 (XAB2) (Homo sapiens (Human)).